We begin with the raw amino-acid sequence, 120 residues long: Response regulator receiver protein CpdR (120 aa).

A Response regulatory domain is found at 3–117 (RILLAEDDND…DLVNEIEKML (115 aa)). The residue at position 52 (aspartate 52) is a 4-aspartylphosphate.

Post-translationally, is phosphorylated by ChpT-P on Asp-52.

It is found in the cytoplasm. In terms of biological role, component of a regulatory phosphorelay system that controls B.abortus cell growth, division, and intracellular survival inside mammalian host cells. This signaling pathway is composed of CckA, ChpT, CtrA and CpdR. CpdR is a response regulator substrate of ChpT. Unphosphorylated CpdR controls steady-state levels of CtrA in the B.abortus cell, likely via CtrA destabilization and activation of its proteolysis. This Brucella abortus (strain 2308) protein is Response regulator receiver protein CpdR.